A 138-amino-acid polypeptide reads, in one-letter code: Oleosin G (138 aa).

3 helical membrane-spanning segments follow: residues Ile14 to Thr34, Val48 to Ala68, and Gly69 to Asn89. The Proline-knot motif lies at Pro47–Pro58.

This sequence belongs to the oleosin family. As to expression, expressed in megagametophytes (at protein level).

The protein localises to the lipid droplet. The protein resides in the membrane. This chain is Oleosin G, found in Pinus massoniana (Chinese red pine).